We begin with the raw amino-acid sequence, 460 residues long: Bifunctional protein GlmU (460 aa).

Residues 1–232 (MALNVVILAA…AIEVEGANNR (232 aa)) form a pyrophosphorylase region. Residues 8–11 (LAAG), K22, Q73, 78–79 (GT), 100–102 (YGD), G137, E157, N172, and N230 each bind UDP-N-acetyl-alpha-D-glucosamine. D102 is a binding site for Mg(2+). N230 provides a ligand contact to Mg(2+). Residues 233–253 (VQLAQLERAYQAREAEKLMLA) form a linker region. The interval 254 to 460 (GANLRDPSRI…GWQRPVKIKK (207 aa)) is N-acetyltransferase. UDP-N-acetyl-alpha-D-glucosamine-binding residues include R336 and K354. Residue H366 is the Proton acceptor of the active site. Residues Y369 and N380 each coordinate UDP-N-acetyl-alpha-D-glucosamine. Residues A383, 389–390 (NY), S408, A426, and R443 contribute to the acetyl-CoA site.

The protein in the N-terminal section; belongs to the N-acetylglucosamine-1-phosphate uridyltransferase family. It in the C-terminal section; belongs to the transferase hexapeptide repeat family. As to quaternary structure, homotrimer. Mg(2+) serves as cofactor.

The protein resides in the cytoplasm. It catalyses the reaction alpha-D-glucosamine 1-phosphate + acetyl-CoA = N-acetyl-alpha-D-glucosamine 1-phosphate + CoA + H(+). The catalysed reaction is N-acetyl-alpha-D-glucosamine 1-phosphate + UTP + H(+) = UDP-N-acetyl-alpha-D-glucosamine + diphosphate. The protein operates within nucleotide-sugar biosynthesis; UDP-N-acetyl-alpha-D-glucosamine biosynthesis; N-acetyl-alpha-D-glucosamine 1-phosphate from alpha-D-glucosamine 6-phosphate (route II): step 2/2. Its pathway is nucleotide-sugar biosynthesis; UDP-N-acetyl-alpha-D-glucosamine biosynthesis; UDP-N-acetyl-alpha-D-glucosamine from N-acetyl-alpha-D-glucosamine 1-phosphate: step 1/1. It functions in the pathway bacterial outer membrane biogenesis; LPS lipid A biosynthesis. Its function is as follows. Catalyzes the last two sequential reactions in the de novo biosynthetic pathway for UDP-N-acetylglucosamine (UDP-GlcNAc). The C-terminal domain catalyzes the transfer of acetyl group from acetyl coenzyme A to glucosamine-1-phosphate (GlcN-1-P) to produce N-acetylglucosamine-1-phosphate (GlcNAc-1-P), which is converted into UDP-GlcNAc by the transfer of uridine 5-monophosphate (from uridine 5-triphosphate), a reaction catalyzed by the N-terminal domain. This chain is Bifunctional protein GlmU, found in Shewanella baltica (strain OS185).